Reading from the N-terminus, the 222-residue chain is MLPHGLIVSCQALPDEPLHSSFIMSKMALAAYEGGAVGIRANTKEDILAIKETVDLPVIGIVKRDYDYSDVFITATSKEVDELIESQCEVIALDATLQQRPKETLDELVSYIRTHAPNVEIMADIATVEEAKNAARLGFDYIGTTLHGYTSYTQGQLLYQNDFQFLKDVLQSVDAKVIAEGNVITPDMYKRVMDLGVHCSVVGGAITRPKEITKRFVQVMED.

Belongs to the NanE family.

It catalyses the reaction an N-acyl-D-glucosamine 6-phosphate = an N-acyl-D-mannosamine 6-phosphate. The protein operates within amino-sugar metabolism; N-acetylneuraminate degradation; D-fructose 6-phosphate from N-acetylneuraminate: step 3/5. In terms of biological role, converts N-acetylmannosamine-6-phosphate (ManNAc-6-P) to N-acetylglucosamine-6-phosphate (GlcNAc-6-P). The chain is Putative N-acetylmannosamine-6-phosphate 2-epimerase from Staphylococcus aureus (strain bovine RF122 / ET3-1).